The sequence spans 259 residues: Complement factor D (259 aa).

A signal peptide spans 1–21; sequence MADRSLHLVVLILLGTALCAA. Positions 22–26 are cleaved as a propeptide — activation peptide; the sequence is QPRGR. A Peptidase S1 domain is found at 27–254; that stretch reads ILRGQEAPSH…YVAWIDGVMA (228 aa). Cysteines 52 and 68 form a disulfide. Residues H67 and D115 each act as charge relay system in the active site. 3 disulfides stabilise this stretch: C149–C215, C180–C196, and C205–C230. S209 (charge relay system) is an active-site residue. Residues 224-228 form a self-inhibitor loop region; it reads TSGSR.

It belongs to the peptidase S1 family. CFD is activated by the removal of 5 residues at the N-terminus, named activation peptide, by the MASP-3 isoform of MASP1.

The protein localises to the secreted. The enzyme catalyses Selective cleavage of Arg-|-Lys bond in complement factor B when in complex with complement subcomponent C3b or with cobra venom factor.. Circulates in plasma in a mature but self-inhibited form. Activated by factor B (CFB), which displaces the self-inhibition loop. Associates with CFB complexed with complement C3b. In terms of biological role, serine protease that initiates the alternative pathway of the complement system, a cascade of proteins that leads to phagocytosis and breakdown of pathogens and signaling that strengthens the adaptive immune system. In contrast to other complement pathways (classical, lectin and GZMK) that are directly activated by pathogens or antigen-antibody complexes, the alternative complement pathway is initiated by the spontaneous hydrolysis of complement C3. The alternative complement pathway acts as an amplification loop that enhances complement activation by mediating the formation of C3 and C5 convertases. Activated CFD cleaves factor B (CFB) when the latter is complexed with complement C3b, activating the C3 convertase of the alternative pathway. In Bos taurus (Bovine), this protein is Complement factor D (CFD).